The following is a 447-amino-acid chain: uncharacterized protein (447 aa).

The interval 392-435 (RFTKPSSSVAKSTSPSLRNSGSDESDLNQSDSDKEDERVVPVPK) is disordered. A compositionally biased stretch (low complexity) spans 395–407 (KPSSSVAKSTSPS). The span at 408–421 (LRNSGSDESDLNQS) shows a compositional bias: polar residues.

This is an uncharacterized protein from Invertebrate iridescent virus 3 (IIV-3).